The following is a 642-amino-acid chain: Threonine--tRNA ligase (642 aa).

The TGS domain maps to 1–61 (MPVITLPDGS…ETDAELSIIT (61 aa)). A catalytic region spans residues 243-534 (DHRKIGKQLD…LIEEYAGRFP (292 aa)). Residues Cys-334, His-385, and His-511 each coordinate Zn(2+).

It belongs to the class-II aminoacyl-tRNA synthetase family. In terms of assembly, homodimer. Requires Zn(2+) as cofactor.

The protein localises to the cytoplasm. The catalysed reaction is tRNA(Thr) + L-threonine + ATP = L-threonyl-tRNA(Thr) + AMP + diphosphate + H(+). Catalyzes the attachment of threonine to tRNA(Thr) in a two-step reaction: L-threonine is first activated by ATP to form Thr-AMP and then transferred to the acceptor end of tRNA(Thr). Also edits incorrectly charged L-seryl-tRNA(Thr). The sequence is that of Threonine--tRNA ligase from Shewanella putrefaciens (strain CN-32 / ATCC BAA-453).